A 502-amino-acid chain; its full sequence is Mannitol 2-dehydrogenase (502 aa).

35–46 (IVHVGVGGFHRA) serves as a coordination point for NAD(+).

The protein belongs to the mannitol dehydrogenase family. Monomer.

The catalysed reaction is D-mannitol + NAD(+) = D-fructose + NADH + H(+). Functionally, catalyzes the NAD(H)-dependent interconversion of D-fructose and D-mannitol in the mannitol metabolic pathway. The chain is Mannitol 2-dehydrogenase from Pyricularia oryzae (strain 70-15 / ATCC MYA-4617 / FGSC 8958) (Rice blast fungus).